The following is a 206-amino-acid chain: Heat shock protein beta-1 (206 aa).

The residue at position 12 (Arg-12) is an Omega-N-methylarginine. The residue at position 13 (Ser-13) is a Phosphoserine. Ser-15 bears the Phosphoserine; by MAPKAPK2 and MAPKAPK3 mark. Ser-27 is modified (phosphoserine). The tract at residues 74–206 (RPAFSRALNR…GPESEQSGAK (133 aa)) is interaction with TGFB1I1. Positions 80–188 (ALNRQLSSGV…QSAEITIPVT (109 aa)) constitute a sHSP domain. Ser-86 bears the Phosphoserine; by MAPKAPK2, MAPKAPK3 and MAPKAPK5 mark. Residues Ser-87, Ser-90, and Ser-102 each carry the phosphoserine modification. N6-acetyllysine is present on Lys-127. Thr-178 bears the Phosphothreonine mark. Phosphoserine occurs at positions 180 and 200.

The protein belongs to the small heat shock protein (HSP20) family. As to quaternary structure, homooligomer. Homodimer; becomes monomeric upon activation. Heterooligomer; with HSPB6. Associates with alpha- and beta-tubulin. Interacts with TGFB1I1. Interacts with CRYAB. Interacts with HSPB8. Interacts with HSPBAP1. Post-translationally, phosphorylated upon exposure to protein kinase C activators and heat shock. Phosphorylation by MAPKAPK2 and MAPKAPK3 in response to stress dissociates HSPB1 from large small heat-shock protein (sHsps) oligomers and impairs its chaperone activity and ability to protect against oxidative stress effectively. Phosphorylation by MAPKAPK5 in response to PKA stimulation induces F-actin rearrangement. As to expression, expressed in a variety of tissues. High levels in lung, adrenal, xiphoid, adipose tissue, heart and striated and smooth muscle, lower levels in the CNS. Adult levels are much higher in the slow-twitch soleus muscle than in the fast-twitch rectus femoris and extensor digitorum muscles.

The protein localises to the cytoplasm. It localises to the nucleus. The protein resides in the cytoskeleton. Its subcellular location is the spindle. Small heat shock protein which functions as a molecular chaperone probably maintaining denatured proteins in a folding-competent state. Plays a role in stress resistance and actin organization. Through its molecular chaperone activity may regulate numerous biological processes including the phosphorylation and the axonal transport of neurofilament proteins. This chain is Heat shock protein beta-1 (Hspb1), found in Rattus norvegicus (Rat).